A 577-amino-acid chain; its full sequence is Alpha-1,2-mannosyltransferase alg9 (577 aa).

The N-terminal stretch at 1–29 (MPSKAPRKSLSVSFVWTFSILAVLRLTSA) is a signal peptide. The Extracellular portion of the chain corresponds to 30 to 68 (SFRVIDDCDEVYNYWEPLHYLLYGYGLQTWEYSPEYAIR). Residues 69–89 (SWFYIALHAVPGFLARGLGLS) form a helical membrane-spanning segment. Topologically, residues 90–95 (RLHVFY) are cytoplasmic. Residues 96 to 116 (FIRGVLACFSAFCETNLILAV) traverse the membrane as a helical segment. Residues 117–136 (ARNFNRAVALHLTSVLFVNS) are Extracellular-facing. Residues 137–159 (GMWSASTSFLPSSFAMNMVTLAL) traverse the membrane as a helical segment. At 160–176 (SAQLSPPSTKRTVKVVS) the chain is on the cytoplasmic side. The helical transmembrane segment at 177-197 (FITIGAVIGWPFSAALSIPFI) threads the bilayer. Topologically, residues 198–217 (LLELVDLKGRFRHLFCRWFK) are extracellular. Residues 218-238 (AIFVALLITGICITVDSLFYH) form a helical membrane-spanning segment. At 239–280 (RIQFVAWNIVKYNVLAKDGRGPDIYGTEPWWYYFANLSLQHN) the chain is on the cytoplasmic side. Residues 281 to 301 (IVLWFAMACGPLVLLAAFTNW) form a helical membrane-spanning segment. Topologically, residues 302 to 305 (INLD) are extracellular. The helical transmembrane segment at 306 to 326 (SFLDLSSVISPFYIWLFIFII) threads the bilayer. Residues 327 to 333 (QPHKEER) are Cytoplasmic-facing. The chain crosses the membrane as a helical span at residues 334–354 (FMYPIYPVLCLAAAIGLDMSL). Over 355 to 375 (KLMIQILSSINETVRSKFPVR) the chain is Extracellular. The helical transmembrane segment at 376 to 396 (FVVLCVYAIIGCLSIARILAI) threads the bilayer. Over 397–577 (QNYNAPMIIY…NLRRASKQQA (181 aa)) the chain is Cytoplasmic.

It belongs to the glycosyltransferase 22 family.

It is found in the endoplasmic reticulum membrane. The enzyme catalyses an alpha-D-Man-(1-&gt;2)-alpha-D-Man-(1-&gt;2)-alpha-D-Man-(1-&gt;3)-[alpha-D-Man-(1-&gt;3)-alpha-D-Man-(1-&gt;6)]-beta-D-Man-(1-&gt;4)-beta-D-GlcNAc-(1-&gt;4)-alpha-D-GlcNAc-diphospho-di-trans,poly-cis-dolichol + a di-trans,poly-cis-dolichyl beta-D-mannosyl phosphate = an alpha-D-Man-(1-&gt;2)-alpha-D-Man-(1-&gt;2)-alpha-D-Man-(1-&gt;3)-[alpha-D-Man-(1-&gt;2)-alpha-D-Man-(1-&gt;3)-alpha-D-Man-(1-&gt;6)]-beta-D-Man-(1-&gt;4)-beta-D-GlcNAc-(1-&gt;4)-alpha-D-GlcNAc-diphospho-di-trans,poly-cis-dolichol + a di-trans,poly-cis-dolichyl phosphate + H(+). It carries out the reaction an alpha-D-Man-(1-&gt;2)-alpha-D-Man-(1-&gt;2)-alpha-D-Man-(1-&gt;3)-[alpha-D-Man-(1-&gt;2)-alpha-D-Man-(1-&gt;3)-[alpha-D-Man-(1-&gt;6)]-alpha-D-Man-(1-&gt;6)]-beta-D-Man-(1-&gt;4)-beta-D-GlcNAc-(1-&gt;4)-alpha-D-GlcNAc-diphospho-di-trans,poly-cis-dolichol + a di-trans,poly-cis-dolichyl beta-D-mannosyl phosphate = an alpha-D-Man-(1-&gt;2)-alpha-D-Man-(1-&gt;2)-alpha-D-Man-(1-&gt;3)-[alpha-D-Man-(1-&gt;2)-alpha-D-Man-(1-&gt;3)-[alpha-D-Man-(1-&gt;2)-alpha-D-Man-(1-&gt;6)]-alpha-D-Man-(1-&gt;6)]-beta-D-Man-(1-&gt;4)-beta-D-GlcNAc-(1-&gt;4)-alpha-D-GlcNAc-diphospho-di-trans,poly-cis-dolichol + a di-trans,poly-cis-dolichyl phosphate + H(+). It participates in protein modification; protein glycosylation. Its function is as follows. Catalyzes the transfer of mannose from Dol-P-Man to lipid-linked oligosaccharides. This chain is Alpha-1,2-mannosyltransferase alg9 (alg9), found in Schizosaccharomyces pombe (strain 972 / ATCC 24843) (Fission yeast).